The chain runs to 599 residues: MTDIKNIRNFSIIAHIDHGKSTLADRFIQVCGGLSERELKEQVLDSMELERERGITIKAQSVTLHYTARDGETYQLNFIDTPGHVDFSYEVSRSLSACEGALLVVDAAQGVEAQSVANCYTAIEQDLEVLAVLNKIDLPQAEPEMVINEIEEIIGLDAHDACRVSAKTGVGIDDLLEQLVERIPAPEGKRESDLQALIIDSWFDNYMGVISLVRVKEGRLKKGDKILVKSTGQTHVVDSLGIFTPKRTETKLLEAGEVGWVSGSIKDIHGAPVGDTLTLAKTPNVAALPGFKNVKPQVYAGMFPVSADDYEDFRDALAKLTLNDASLFYEPETSDALGFGFRVGFLGMLHMEIIQERLEREYDLDLITTAPTVVYELALVSGDILHVDNPSKLPEGSKIEEFREPIARVNILVPQEFVGNVITLCVERRGAQINMQYLGKQVALTYDIPMAEVVLDFFDRIKSVSRGFASMDYAFERFEATKLVRVDVLINGDKVDALAMICHLDQSAYRGRALCEKMKELVPRQMFDVAIQAAIGSKIIARQTVKALRKNVTAKCYGGDVSRKKKLLQKQKEGKKRMKQVGNVEIPQEAFLAVLKVDD.

Positions 5-187 (KNIRNFSIIA…QLVERIPAPE (183 aa)) constitute a tr-type G domain. Residues 17–22 (DHGKST) and 134–137 (NKID) contribute to the GTP site.

The protein belongs to the TRAFAC class translation factor GTPase superfamily. Classic translation factor GTPase family. LepA subfamily.

It localises to the cell inner membrane. The enzyme catalyses GTP + H2O = GDP + phosphate + H(+). Required for accurate and efficient protein synthesis under certain stress conditions. May act as a fidelity factor of the translation reaction, by catalyzing a one-codon backward translocation of tRNAs on improperly translocated ribosomes. Back-translocation proceeds from a post-translocation (POST) complex to a pre-translocation (PRE) complex, thus giving elongation factor G a second chance to translocate the tRNAs correctly. Binds to ribosomes in a GTP-dependent manner. The protein is Elongation factor 4 of Alcanivorax borkumensis (strain ATCC 700651 / DSM 11573 / NCIMB 13689 / SK2).